The following is a 1026-amino-acid chain: Multidrug resistance protein MdtC (1026 aa).

11 helical membrane-spanning segments follow: residues 15 to 35, 333 to 353, 360 to 380, 387 to 407, 431 to 451, 463 to 483, 528 to 548, 853 to 873, 897 to 917, 953 to 973, and 984 to 1004; these read ILIA…LPVA, EVEE…FLFL, LIPA…MYLC, LSLM…IVVL, VGFT…PLLL, FAVT…TLTP, LVGV…IAIP, LILI…LYES, LFNA…IGIV, PIMM…LSGG, and ITIV…TPVV.

Belongs to the resistance-nodulation-cell division (RND) (TC 2.A.6) family. MdtC subfamily. As to quaternary structure, part of a tripartite efflux system composed of MdtA, MdtB and MdtC. MdtC forms a heteromultimer with MdtB.

Its subcellular location is the cell inner membrane. The chain is Multidrug resistance protein MdtC from Salmonella paratyphi A (strain ATCC 9150 / SARB42).